Here is a 459-residue protein sequence, read N- to C-terminus: Serine protease HTRA1 (459 aa).

An N-terminal signal peptide occupies residues M1–L18. In terms of domain architecture, IGFBP N-terminal spans S22–P92. Intrachain disulfides connect C26-C51, C30-C53, C35-C54, C42-C57, C65-C80, C74-C89, C91-C109, and C98-C134. Residues C74 to Q136 form the Kazal-like domain. The segment at G183–M343 is serine protease. Catalysis depends on charge relay system residues H199, D229, and S307. The PDZ domain occupies A344–E446.

Belongs to the peptidase S1C family. In terms of assembly, forms homotrimers. In the presence of substrate, may form higher-order multimers in a PDZ-independent manner.

The protein localises to the cell membrane. Its subcellular location is the secreted. It is found in the cytoplasm. It localises to the cytosol. In terms of biological role, serine protease with a variety of targets, including extracellular matrix proteins and proteoglycans such as biglycan, syndecan-4 and glypican-4. Through cleavage of proteoglycans, may release soluble FGF-glycosaminoglycan complexes that promote the range and intensity of FGF signals in the extracellular space. Consequently, facilitates inductive processes in the developing embryo, such as posteriorization, mesoderm induction and neuronal differentiation. Regulates the availability of insulin-like growth factors (IGFs) by cleaving IGF-binding proteins. Inhibits signaling mediated by TGF-beta family members. Consequently, may regulate many physiological processes. Intracellularly, degrades TSC2, leading to the activation of TSC2 downstream targets. This chain is Serine protease HTRA1 (htra1), found in Xenopus laevis (African clawed frog).